A 304-amino-acid polypeptide reads, in one-letter code: N-acetylmuramic acid 6-phosphate etherase (304 aa).

Residues 62–225 enclose the SIS domain; it reads IVQAFQNGGR…TTASMVMIGK (164 aa). Glu-90 serves as the catalytic Proton donor. Glu-121 is an active-site residue.

It belongs to the GCKR-like family. MurNAc-6-P etherase subfamily. Homodimer.

The enzyme catalyses N-acetyl-D-muramate 6-phosphate + H2O = N-acetyl-D-glucosamine 6-phosphate + (R)-lactate. It functions in the pathway amino-sugar metabolism; 1,6-anhydro-N-acetylmuramate degradation. Its pathway is amino-sugar metabolism; N-acetylmuramate degradation. The protein operates within cell wall biogenesis; peptidoglycan recycling. In terms of biological role, specifically catalyzes the cleavage of the D-lactyl ether substituent of MurNAc 6-phosphate, producing GlcNAc 6-phosphate and D-lactate. Together with AnmK, is also required for the utilization of anhydro-N-acetylmuramic acid (anhMurNAc) either imported from the medium or derived from its own cell wall murein, and thus plays a role in cell wall recycling. This is N-acetylmuramic acid 6-phosphate etherase from Actinobacillus pleuropneumoniae serotype 5b (strain L20).